Here is a 1033-residue protein sequence, read N- to C-terminus: uncharacterized protein (1033 aa).

This is an uncharacterized protein from Mycoplasma pneumoniae (strain ATCC 29342 / M129 / Subtype 1) (Mycoplasmoides pneumoniae).